The primary structure comprises 568 residues: Proline--tRNA ligase (568 aa).

Belongs to the class-II aminoacyl-tRNA synthetase family. ProS type 1 subfamily. Homodimer.

The protein localises to the cytoplasm. The enzyme catalyses tRNA(Pro) + L-proline + ATP = L-prolyl-tRNA(Pro) + AMP + diphosphate. Its function is as follows. Catalyzes the attachment of proline to tRNA(Pro) in a two-step reaction: proline is first activated by ATP to form Pro-AMP and then transferred to the acceptor end of tRNA(Pro). As ProRS can inadvertently accommodate and process non-cognate amino acids such as alanine and cysteine, to avoid such errors it has two additional distinct editing activities against alanine. One activity is designated as 'pretransfer' editing and involves the tRNA(Pro)-independent hydrolysis of activated Ala-AMP. The other activity is designated 'posttransfer' editing and involves deacylation of mischarged Ala-tRNA(Pro). The misacylated Cys-tRNA(Pro) is not edited by ProRS. This chain is Proline--tRNA ligase, found in Listeria innocua serovar 6a (strain ATCC BAA-680 / CLIP 11262).